A 207-amino-acid polypeptide reads, in one-letter code: ATP-dependent Clp protease proteolytic subunit 1 (207 aa).

The active-site Nucleophile is the serine 103. The active site involves histidine 128.

This sequence belongs to the peptidase S14 family. As to quaternary structure, fourteen ClpP subunits assemble into 2 heptameric rings which stack back to back to give a disk-like structure with a central cavity, resembling the structure of eukaryotic proteasomes.

It localises to the cytoplasm. The catalysed reaction is Hydrolysis of proteins to small peptides in the presence of ATP and magnesium. alpha-casein is the usual test substrate. In the absence of ATP, only oligopeptides shorter than five residues are hydrolyzed (such as succinyl-Leu-Tyr-|-NHMec, and Leu-Tyr-Leu-|-Tyr-Trp, in which cleavage of the -Tyr-|-Leu- and -Tyr-|-Trp bonds also occurs).. In terms of biological role, cleaves peptides in various proteins in a process that requires ATP hydrolysis. Has a chymotrypsin-like activity. Plays a major role in the degradation of misfolded proteins. The polypeptide is ATP-dependent Clp protease proteolytic subunit 1 (Synechococcus sp. (strain CC9605)).